The chain runs to 232 residues: DNA damage-inducible transcript 4 protein (232 aa).

The disordered stretch occupies residues 1 to 71 (MPSLWDRFSS…SGFGPEEDTA (71 aa)). Residues 9–22 (SSSSTSSSPSSLPR) are compositionally biased toward low complexity. Ser19 is subject to Phosphoserine. Residues Thr23 and Thr25 each carry the phosphothreonine modification. Ser121 is subject to Phosphoserine.

The protein belongs to the DDIT4 family. Monomer. Interacts with BTRC. Identified in a complex with CUL4A, DDB1 and BTRC. Interacts with TXNIP; this inhibits the proteasomal degradation of DDIT4. In terms of processing, phosphorylated by GSK3B; this promotes proteasomal degradation. Post-translationally, polyubiquitinated by a DCX (DDB1-CUL4A-RBX1) E3 ubiquitin-protein ligase complex with BTRC as substrate-recognition component, leading to its proteasomal degradation. In terms of tissue distribution, broadly expressed, with lowest levels in brain, skeletal muscle and intestine. Up-regulated in substantia nigra neurons from Parkinson disease patients (at protein level).

The protein localises to the mitochondrion. It is found in the cytoplasm. It localises to the cytosol. In terms of biological role, regulates cell growth, proliferation and survival via inhibition of the activity of the mammalian target of rapamycin complex 1 (mTORC1). Inhibition of mTORC1 is mediated by a pathway that involves DDIT4/REDD1, AKT1, the TSC1-TSC2 complex and the GTPase RHEB. Plays an important role in responses to cellular energy levels and cellular stress, including responses to hypoxia and DNA damage. Regulates p53/TP53-mediated apoptosis in response to DNA damage via its effect on mTORC1 activity. Its role in the response to hypoxia depends on the cell type; it mediates mTORC1 inhibition in fibroblasts and thymocytes, but not in hepatocytes. Required for mTORC1-mediated defense against viral protein synthesis and virus replication. Inhibits neuronal differentiation and neurite outgrowth mediated by NGF via its effect on mTORC1 activity. Required for normal neuron migration during embryonic brain development. Plays a role in neuronal cell death. This chain is DNA damage-inducible transcript 4 protein (DDIT4), found in Homo sapiens (Human).